The sequence spans 308 residues: Protoheme IX farnesyltransferase (308 aa).

Helical transmembrane passes span 31-51 (VIEL…RGTV), 53-73 (PLLI…ANAL), 102-122 (NALV…WWTT), 124-144 (LLSG…YTLL), 149-169 (TSQN…IGWS), 170-190 (AVTG…FFWT), 240-260 (LALA…VWFL), and 288-308 (YLAV…PHLF).

Belongs to the UbiA prenyltransferase family. Protoheme IX farnesyltransferase subfamily.

Its subcellular location is the cell membrane. It carries out the reaction heme b + (2E,6E)-farnesyl diphosphate + H2O = Fe(II)-heme o + diphosphate. Its pathway is porphyrin-containing compound metabolism; heme O biosynthesis; heme O from protoheme: step 1/1. In terms of biological role, converts heme B (protoheme IX) to heme O by substitution of the vinyl group on carbon 2 of heme B porphyrin ring with a hydroxyethyl farnesyl side group. The sequence is that of Protoheme IX farnesyltransferase from Mycobacterium avium (strain 104).